The sequence spans 44 residues: F420-non-reducing hydrogenase vhu subunit U (44 aa).

Positions 20 and 23 each coordinate Ni(2+). Selenocysteine 20 is a non-standard amino acid (selenocysteine). Positions 27-44 are cleaved as a propeptide — removed in mature form; it reads MIVEDAEGNVVFEIVNDE.

This sequence belongs to the [NiFe]/[NiFeSe] hydrogenase large subunit family. The F420-non-reducing hydrogenase vhu is composed of four subunits; VhuA, VhuD, VhuG and VhuU. Ni(2+) serves as cofactor.

The sequence is that of F420-non-reducing hydrogenase vhu subunit U (vhuU) from Methanococcus voltae.